The chain runs to 426 residues: Serine--tRNA ligase (426 aa).

Residue 231-233 (TAE) coordinates L-serine. An ATP-binding site is contributed by 262 to 264 (RSE). Residue glutamate 285 participates in L-serine binding. 349–352 (EISS) is a binding site for ATP. L-serine is bound at residue serine 385.

The protein belongs to the class-II aminoacyl-tRNA synthetase family. Type-1 seryl-tRNA synthetase subfamily. As to quaternary structure, homodimer. The tRNA molecule binds across the dimer.

The protein resides in the cytoplasm. It catalyses the reaction tRNA(Ser) + L-serine + ATP = L-seryl-tRNA(Ser) + AMP + diphosphate + H(+). The enzyme catalyses tRNA(Sec) + L-serine + ATP = L-seryl-tRNA(Sec) + AMP + diphosphate + H(+). The protein operates within aminoacyl-tRNA biosynthesis; selenocysteinyl-tRNA(Sec) biosynthesis; L-seryl-tRNA(Sec) from L-serine and tRNA(Sec): step 1/1. Its function is as follows. Catalyzes the attachment of serine to tRNA(Ser). Is also able to aminoacylate tRNA(Sec) with serine, to form the misacylated tRNA L-seryl-tRNA(Sec), which will be further converted into selenocysteinyl-tRNA(Sec). The sequence is that of Serine--tRNA ligase from Brevibacillus brevis (strain 47 / JCM 6285 / NBRC 100599).